Here is a 282-residue protein sequence, read N- to C-terminus: Phosphatidylglycerol--prolipoprotein diacylglyceryl transferase (282 aa).

The next 4 membrane-spanning stretches (helical) occupy residues 19 to 39, 59 to 79, 90 to 110, and 120 to 140; these read IGPITIRWYGLLIATAVLIGV, LSIWLVIGAIPAARIYYVLFQ, IIAIWQGGIAIHGAIIGGTLA, and VPFWQLADLVAPSLILGQAIG. Arg141 is a binding site for a 1,2-diacyl-sn-glycero-3-phospho-(1'-sn-glycerol). Helical transmembrane passes span 181-201, 212-232, and 245-265; these read TFLYESIWDLMVFALLITLFF, VGTLFMVYLATYSLGRLWIEG, and IAQVVSLTGITLGLAGLAWLY.

Belongs to the Lgt family.

It localises to the cell inner membrane. It carries out the reaction L-cysteinyl-[prolipoprotein] + a 1,2-diacyl-sn-glycero-3-phospho-(1'-sn-glycerol) = an S-1,2-diacyl-sn-glyceryl-L-cysteinyl-[prolipoprotein] + sn-glycerol 1-phosphate + H(+). It functions in the pathway protein modification; lipoprotein biosynthesis (diacylglyceryl transfer). Its function is as follows. Catalyzes the transfer of the diacylglyceryl group from phosphatidylglycerol to the sulfhydryl group of the N-terminal cysteine of a prolipoprotein, the first step in the formation of mature lipoproteins. The chain is Phosphatidylglycerol--prolipoprotein diacylglyceryl transferase from Trichormus variabilis (strain ATCC 29413 / PCC 7937) (Anabaena variabilis).